The chain runs to 727 residues: FACT complex subunit Ssrp1 (727 aa).

Disordered regions lie at residues 458–565 (AEAR…AFML) and 596–727 (ELKD…EGSD). Acidic residues-rich tracts occupy residues 464–479 (EEED…ESTD) and 487–508 (NESD…DDSD). The segment covering 510-519 (SGGGGDGGTD) has biased composition (gly residues). 3 stretches are compositionally biased toward basic and acidic residues: residues 529–555 (KKNE…DTGK), 596–620 (ELKD…EMRN), and 675–703 (DQEK…KSES). The segment at residues 556–622 (PKRGTSAFML…RYQEEMRNYK (67 aa)) is a DNA-binding region (HMG box). A compositionally biased stretch (acidic residues) spans 704-727 (EGGDSDDASNASEDDDEEEDEGSD).

The protein belongs to the SSRP1 family. Component of the FACT complex, a stable heterodimer of dre4/spt16 and Ssrp.

The protein resides in the nucleus. It localises to the chromosome. It is found in the nucleolus. Its function is as follows. Component of the FACT complex, a general chromatin factor that acts to reorganize nucleosomes. The FACT complex is involved in multiple processes that require DNA as a template such as mRNA elongation, DNA replication and DNA repair. During transcription elongation the FACT complex acts as a histone chaperone that both destabilizes and restores nucleosomal structure. It facilitates the passage of RNA polymerase II and transcription by promoting the dissociation of one histone H2A-H2B dimer from the nucleosome, then subsequently promotes the reestablishment of the nucleosome following the passage of RNA polymerase II. Binds specifically to single-stranded DNA and RNA with highest affinity for nucleotides G and U. The FACT complex is required for expression of Hox genes. This is FACT complex subunit Ssrp1 (Ssrp) from Drosophila pseudoobscura pseudoobscura (Fruit fly).